The chain runs to 246 residues: tRNA (guanine-N(1)-)-methyltransferase (246 aa).

S-adenosyl-L-methionine contacts are provided by residues Gly114 and 134–139 (IGDYIL).

This sequence belongs to the RNA methyltransferase TrmD family. As to quaternary structure, homodimer.

The protein localises to the cytoplasm. It catalyses the reaction guanosine(37) in tRNA + S-adenosyl-L-methionine = N(1)-methylguanosine(37) in tRNA + S-adenosyl-L-homocysteine + H(+). In terms of biological role, specifically methylates guanosine-37 in various tRNAs. The sequence is that of tRNA (guanine-N(1)-)-methyltransferase from Coxiella burnetii (strain CbuG_Q212) (Coxiella burnetii (strain Q212)).